The sequence spans 117 residues: Ubiquitin-like protein 3 (117 aa).

The region spanning 10–88 (INLRLILVSG…PFGKTTVMHL (79 aa)) is the Ubiquitin-like domain. C113 is lipidated: S-palmitoyl cysteine. Position 114 is a cysteine methyl ester (C114). A lipid anchor (S-geranylgeranyl cysteine) is attached at C114. A propeptide spans 115–117 (VIL) (removed in mature form).

Its subcellular location is the cell membrane. The polypeptide is Ubiquitin-like protein 3 (Ubl3) (Mus musculus (Mouse)).